The sequence spans 88 residues: Small ribosomal subunit protein bS16 (88 aa).

The protein belongs to the bacterial ribosomal protein bS16 family.

The polypeptide is Small ribosomal subunit protein bS16 (Halothermothrix orenii (strain H 168 / OCM 544 / DSM 9562)).